Consider the following 617-residue polypeptide: Formin-binding protein 1 (617 aa).

The segment at 1–79 (MSWGTELWDQ…CKAFISNLNE (79 aa)) is required for self-association and induction of membrane tubulation. Residues 1–264 (MSWGTELWDQ…AAESIDQKND (264 aa)) form the F-BAR domain. Positions 1-335 (MSWGTELWDQ…KKNKLMSLLT (335 aa)) are interaction with microtubules. N6-acetyllysine occurs at positions 66 and 110. Positions 67-259 (YTSCKAFISN…DGIVKAAESI (193 aa)) form a coiled coil. The tract at residues 251–617 (GIVKAAESID…VCLDKNAKDS (367 aa)) is required for self-association and induction of membrane tubulation. 2 disordered regions span residues 280-315 (GDIE…KFGG) and 333-366 (LLTS…QKEP). Residues Ser-296 and Ser-299 each carry the phosphoserine modification. A compositionally biased stretch (pro residues) spans 338–347 (HQPPPPPPAS). 2 positions are modified to phosphoserine: Ser-349 and Ser-359. The stretch at 398 to 490 (TPEDFSNLPP…EVEGRLPARS (93 aa)) forms a coiled coil. Residues 400–552 (EDFSNLPPEQ…FDDEEPLPAI (153 aa)) form an interaction with RND2 region. Residues 404-481 (NLPPEQRRKK…TQKFEAWLAE (78 aa)) enclose the REM-1 domain. A disordered region spans residues 486-531 (LPARSEQARRQSGLYDSQNPPTVNNCAQDRESPDGSYTEEQSQESE). An interaction with PDE6G region spans residues 495-617 (RQSGLYDSQN…VCLDKNAKDS (123 aa)). Residue Ser-497 is modified to Phosphoserine. The span at 499-512 (LYDSQNPPTVNNCA) shows a compositional bias: polar residues. Tyr-500 bears the Phosphotyrosine mark. The segment at 514 to 617 (DRESPDGSYT…VCLDKNAKDS (104 aa)) is required for interaction with TNKS. Phosphoserine is present on Ser-521. An interaction with DNM1 and DNM3 region spans residues 535-617 (LATDFDDEFD…VCLDKNAKDS (83 aa)). The 62-residue stretch at 550-611 (PAIGTCKALY…PTSYVEVCLD (62 aa)) folds into the SH3 domain. The segment at 550-617 (PAIGTCKALY…VCLDKNAKDS (68 aa)) is interaction with ARHGAP17, DAAM1, DIAPH1 and DIAPH2. Positions 553 to 609 (GTCKALYTFEGQNEGTISVVEGETLYVIEEDKGDGWTRIRRNEDEEGYVPTSYVEVC) are interaction with DNM2 and WASL. Residues 553 to 610 (GTCKALYTFEGQNEGTISVVEGETLYVIEEDKGDGWTRIRRNEDEEGYVPTSYVEVCL) are interaction with FASLG.

Belongs to the FNBP1 family. Interacts specifically with GTP-bound RND2 and CDC42. Interacts with PDE6G and microtubules. Homodimerizes, the dimers can polymerize end-to-end to form filamentous structures. Interacts with AKAP9, ARHGAP17, DAAM1, DIAPH1, DIAPH2, DNM1, DNM2, DNM3, FASLG/FASL, SNX2 and WASL/N-WASP. May interact with TNKS. As to expression, very highly expressed in the epithelial cells of the gastrointestinal tract, respiratory, reproductive and urinary systems. Also highly expressed in brown adipose tissue, cardiomyocytes, enteric ganglia and glucagon producing cells of the pancreas. Expressed in germ cells of the testis and all regions of the brain.

It localises to the cytoplasm. It is found in the cytoskeleton. The protein localises to the cell cortex. The protein resides in the lysosome. Its subcellular location is the cytoplasmic vesicle. It localises to the cell membrane. It is found in the membrane. The protein localises to the clathrin-coated pit. Its function is as follows. May act as a link between RND2 signaling and regulation of the actin cytoskeleton. Required to coordinate membrane tubulation with reorganization of the actin cytoskeleton during the late stage of clathrin-mediated endocytosis. Binds to lipids such as phosphatidylinositol 4,5-bisphosphate and phosphatidylserine and promotes membrane invagination and the formation of tubules. Also enhances actin polymerization via the recruitment of WASL/N-WASP, which in turn activates the Arp2/3 complex. Actin polymerization may promote the fission of membrane tubules to form endocytic vesicles. May be required for the lysosomal retention of FASLG/FASL. The sequence is that of Formin-binding protein 1 (FNBP1) from Homo sapiens (Human).